The primary structure comprises 296 residues: Regulatory protein PchR (296 aa).

The region spanning 201–296 (HAARDLLVGA…RYGISPSEIR (96 aa)) is the HTH araC/xylS-type domain. 2 consecutive DNA-binding regions (H-T-H motif) follow at residues 218 to 239 (DTLA…RKVF) and 266 to 288 (VSTV…RKRY).

In terms of biological role, positive activator of the genes for pyochelin and ferripyochelin receptors. In Pseudomonas aeruginosa (strain ATCC 15692 / DSM 22644 / CIP 104116 / JCM 14847 / LMG 12228 / 1C / PRS 101 / PAO1), this protein is Regulatory protein PchR (pchR).